We begin with the raw amino-acid sequence, 214 residues long: Guanylate kinase (214 aa).

The Guanylate kinase-like domain occupies Gly12–Ala191. Ser19 to Thr26 provides a ligand contact to ATP.

Belongs to the guanylate kinase family.

It is found in the cytoplasm. The catalysed reaction is GMP + ATP = GDP + ADP. Essential for recycling GMP and indirectly, cGMP. This is Guanylate kinase from Paramagnetospirillum magneticum (strain ATCC 700264 / AMB-1) (Magnetospirillum magneticum).